A 229-amino-acid chain; its full sequence is Flagellar L-ring protein (229 aa).

Residues Met-1 to Gly-25 form the signal peptide. Residue Cys-26 is the site of N-palmitoyl cysteine attachment. Cys-26 is lipidated: S-diacylglycerol cysteine.

The protein belongs to the FlgH family. The basal body constitutes a major portion of the flagellar organelle and consists of four rings (L,P,S, and M) mounted on a central rod.

The protein localises to the cell outer membrane. Its subcellular location is the bacterial flagellum basal body. Assembles around the rod to form the L-ring and probably protects the motor/basal body from shearing forces during rotation. The protein is Flagellar L-ring protein of Burkholderia ambifaria (strain MC40-6).